A 477-amino-acid chain; its full sequence is Lactate utilization protein B (477 aa).

4Fe-4S ferredoxin-type domains follow at residues 304–334 and 353–382; these read GTQF…GHSY and YDTY…LHDL. [4Fe-4S] cluster-binding residues include C313, C316, C319, C323, C366, C369, and C373. The segment at 443–463 is disordered; sequence GPKPLQAWTNSRDFPMPDDEN.

Belongs to the LutB/YkgF family.

Its function is as follows. Is involved in L-lactate degradation and allows cells to grow with lactate as the sole carbon source. Has probably a role as an electron transporter during oxidation of L-lactate. The chain is Lactate utilization protein B from Macrococcus caseolyticus (strain JCSC5402) (Macrococcoides caseolyticum).